Consider the following 179-residue polypeptide: UPF0227 protein Shewana3_2292 (179 aa).

It belongs to the UPF0227 family.

This Shewanella sp. (strain ANA-3) protein is UPF0227 protein Shewana3_2292.